Consider the following 496-residue polypeptide: Beta-amylase (496 aa).

Substrate-binding residues include D54, H94, and D102. The active-site Proton donor is the E187. Residues K296, H301, and T343 each contribute to the substrate site. The active-site Proton acceptor is the E381. Residues 382–383 (NA) and R421 contribute to the substrate site. The interval 455–496 (YNHGIPPLKRSGPKIPDDVLNEATKPIPPFPWDSETDMKVDG) is disordered.

The protein belongs to the glycosyl hydrolase 14 family.

It carries out the reaction Hydrolysis of (1-&gt;4)-alpha-D-glucosidic linkages in polysaccharides so as to remove successive maltose units from the non-reducing ends of the chains.. The protein is Beta-amylase (BMY1) of Medicago sativa (Alfalfa).